The chain runs to 310 residues: Aspartate carbamoyltransferase catalytic subunit (310 aa).

Carbamoyl phosphate contacts are provided by arginine 60 and threonine 61. An L-aspartate-binding site is contributed by lysine 88. Residues arginine 110, histidine 138, and glutamine 141 each contribute to the carbamoyl phosphate site. L-aspartate is bound by residues arginine 171 and arginine 225. Carbamoyl phosphate is bound by residues glycine 266 and proline 267.

It belongs to the aspartate/ornithine carbamoyltransferase superfamily. ATCase family. As to quaternary structure, heterododecamer (2C3:3R2) of six catalytic PyrB chains organized as two trimers (C3), and six regulatory PyrI chains organized as three dimers (R2).

It catalyses the reaction carbamoyl phosphate + L-aspartate = N-carbamoyl-L-aspartate + phosphate + H(+). Its pathway is pyrimidine metabolism; UMP biosynthesis via de novo pathway; (S)-dihydroorotate from bicarbonate: step 2/3. In terms of biological role, catalyzes the condensation of carbamoyl phosphate and aspartate to form carbamoyl aspartate and inorganic phosphate, the committed step in the de novo pyrimidine nucleotide biosynthesis pathway. The chain is Aspartate carbamoyltransferase catalytic subunit from Christiangramia forsetii (strain DSM 17595 / CGMCC 1.15422 / KT0803) (Gramella forsetii).